The following is a 337-amino-acid chain: Holliday junction branch migration complex subunit RuvB (337 aa).

The tract at residues A4–Y186 is large ATPase domain (RuvB-L). ATP is bound by residues I25, R26, G67, K70, T71, T72, E133–Y135, R176, Y186, and R223. T71 is a Mg(2+) binding site. The interval K187–D257 is small ATPAse domain (RuvB-S). The head domain (RuvB-H) stretch occupies residues V260–K337. Residues R296, R315, and R320 each coordinate DNA.

The protein belongs to the RuvB family. In terms of assembly, homohexamer. Forms an RuvA(8)-RuvB(12)-Holliday junction (HJ) complex. HJ DNA is sandwiched between 2 RuvA tetramers; dsDNA enters through RuvA and exits via RuvB. An RuvB hexamer assembles on each DNA strand where it exits the tetramer. Each RuvB hexamer is contacted by two RuvA subunits (via domain III) on 2 adjacent RuvB subunits; this complex drives branch migration. In the full resolvosome a probable DNA-RuvA(4)-RuvB(12)-RuvC(2) complex forms which resolves the HJ.

It localises to the cytoplasm. The enzyme catalyses ATP + H2O = ADP + phosphate + H(+). In terms of biological role, the RuvA-RuvB-RuvC complex processes Holliday junction (HJ) DNA during genetic recombination and DNA repair, while the RuvA-RuvB complex plays an important role in the rescue of blocked DNA replication forks via replication fork reversal (RFR). RuvA specifically binds to HJ cruciform DNA, conferring on it an open structure. The RuvB hexamer acts as an ATP-dependent pump, pulling dsDNA into and through the RuvAB complex. RuvB forms 2 homohexamers on either side of HJ DNA bound by 1 or 2 RuvA tetramers; 4 subunits per hexamer contact DNA at a time. Coordinated motions by a converter formed by DNA-disengaged RuvB subunits stimulates ATP hydrolysis and nucleotide exchange. Immobilization of the converter enables RuvB to convert the ATP-contained energy into a lever motion, pulling 2 nucleotides of DNA out of the RuvA tetramer per ATP hydrolyzed, thus driving DNA branch migration. The RuvB motors rotate together with the DNA substrate, which together with the progressing nucleotide cycle form the mechanistic basis for DNA recombination by continuous HJ branch migration. Branch migration allows RuvC to scan DNA until it finds its consensus sequence, where it cleaves and resolves cruciform DNA. The sequence is that of Holliday junction branch migration complex subunit RuvB from Aliivibrio fischeri (strain ATCC 700601 / ES114) (Vibrio fischeri).